Here is a 165-residue protein sequence, read N- to C-terminus: Leukotoxin-activating lysine-acyltransferase LktC (165 aa).

Active-site residues include His22 and Asp91.

Belongs to the RTX toxin acyltransferase family.

The protein resides in the cytoplasm. It carries out the reaction a fatty acyl-[ACP] + L-lysyl-[protein] = N(6)-(fatty acyl)-L-lysyl-[protein] + holo-[ACP] + H(+). In terms of biological role, involved in fatty acylation of the protoxin (LktA) at two internal lysine residues, thereby converting it to the active toxin. The polypeptide is Leukotoxin-activating lysine-acyltransferase LktC (lktC) (Pasteurella haemolytica-like sp. (strain 5943B)).